The sequence spans 229 residues: Peptidase E (229 aa).

Active-site charge relay system residues include S120, D135, and H157.

This sequence belongs to the peptidase S51 family.

The protein resides in the cytoplasm. The catalysed reaction is Dipeptidase E catalyzes the hydrolysis of dipeptides Asp-|-Xaa. It does not act on peptides with N-terminal Glu, Asn or Gln, nor does it cleave isoaspartyl peptides.. In terms of biological role, hydrolyzes dipeptides containing N-terminal aspartate residues. May play a role in allowing the cell to use peptide aspartate to spare carbon otherwise required for the synthesis of the aspartate family of amino acids. The polypeptide is Peptidase E (pepE) (Salmonella typhimurium (strain LT2 / SGSC1412 / ATCC 700720)).